The primary structure comprises 158 residues: Ribonuclease H (158 aa).

One can recognise an RNase H type-1 domain in the interval 3-144 (ELKLIHIFTD…CDQLARAAAE (142 aa)). Mg(2+) is bound by residues Asp12, Glu50, Asp72, and Asp136.

Belongs to the RNase H family. In terms of assembly, monomer. Requires Mg(2+) as cofactor.

Its subcellular location is the cytoplasm. The catalysed reaction is Endonucleolytic cleavage to 5'-phosphomonoester.. Endonuclease that specifically degrades the RNA of RNA-DNA hybrids. This chain is Ribonuclease H, found in Shewanella sp. (strain MR-4).